Reading from the N-terminus, the 127-residue chain is Small ribosomal subunit protein uS13 (127 aa).

The segment at 95–127 (GLPVHGQRTSTNARTRKGPRRAAVKKKGGAKKK) is disordered. Residues 108 to 127 (RTRKGPRRAAVKKKGGAKKK) show a composition bias toward basic residues.

Belongs to the universal ribosomal protein uS13 family. Part of the 30S ribosomal subunit. Forms a loose heterodimer with protein S19. Forms two bridges to the 50S subunit in the 70S ribosome.

In terms of biological role, located at the top of the head of the 30S subunit, it contacts several helices of the 16S rRNA. In the 70S ribosome it contacts the 23S rRNA (bridge B1a) and protein L5 of the 50S subunit (bridge B1b), connecting the 2 subunits; these bridges are implicated in subunit movement. Contacts the tRNAs in the A and P-sites. This Desulfatibacillum aliphaticivorans protein is Small ribosomal subunit protein uS13.